A 323-amino-acid chain; its full sequence is Protoheme IX farnesyltransferase (323 aa).

Helical transmembrane passes span 50 to 70 (IVLILLTVFGGWMGAAAANTF), 97 to 117 (NRDASIFAWVLTVASFLWLWL), 118 to 138 (LCDSMLAGIFVLITIFFYIFV), 150 to 170 (NIVWGGAAGCMPVLVGWAVIV), 184 to 204 (AIVLFMVIFFWTPPHTWALAM), 231 to 248 (IVWYSVATVLTTFLLIPA), 252 to 274 (IYAAIAVISGVTFLFMAIKLHLG), and 293 to 313 (YLAVLFVALSVDAVLGLETIG).

The protein belongs to the UbiA prenyltransferase family. Protoheme IX farnesyltransferase subfamily.

It localises to the cell membrane. The enzyme catalyses heme b + (2E,6E)-farnesyl diphosphate + H2O = Fe(II)-heme o + diphosphate. The protein operates within porphyrin-containing compound metabolism; heme O biosynthesis; heme O from protoheme: step 1/1. Functionally, converts heme B (protoheme IX) to heme O by substitution of the vinyl group on carbon 2 of heme B porphyrin ring with a hydroxyethyl farnesyl side group. The polypeptide is Protoheme IX farnesyltransferase (Corynebacterium glutamicum (strain R)).